Here is a 127-residue protein sequence, read N- to C-terminus: Large ribosomal subunit protein uL24 (127 aa).

The protein belongs to the universal ribosomal protein uL24 family. Component of the large ribosomal subunit. Mature ribosomes consist of a small (40S) and a large (60S) subunit. The 40S subunit contains about 32 different proteins and 1 molecule of RNA (18S). The 60S subunit contains 45 different proteins and 3 molecules of RNA (25S, 5.8S and 5S).

Its subcellular location is the cytoplasm. Component of the ribosome, a large ribonucleoprotein complex responsible for the synthesis of proteins in the cell. The small ribosomal subunit (SSU) binds messenger RNAs (mRNAs) and translates the encoded message by selecting cognate aminoacyl-transfer RNA (tRNA) molecules. The large subunit (LSU) contains the ribosomal catalytic site termed the peptidyl transferase center (PTC), which catalyzes the formation of peptide bonds, thereby polymerizing the amino acids delivered by tRNAs into a polypeptide chain. The nascent polypeptides leave the ribosome through a tunnel in the LSU and interact with protein factors that function in enzymatic processing, targeting, and the membrane insertion of nascent chains at the exit of the ribosomal tunnel. This chain is Large ribosomal subunit protein uL24, found in Candida albicans (strain SC5314 / ATCC MYA-2876) (Yeast).